The primary structure comprises 100 residues: Transcription elongation factor A protein-like 7 (100 aa).

The span at 1-32 (MQKPCKENEGKPKCSVPKREEKRPYGEFERQQ) shows a compositional bias: basic and acidic residues. The segment at 1 to 34 (MQKPCKENEGKPKCSVPKREEKRPYGEFERQQTE) is disordered. Residues 60 to 88 (EEMTREGDEMERCLEEIRGLRKKFRALHS) are a coiled coil.

The protein belongs to the TFS-II family. TFA subfamily. In terms of tissue distribution, highly expressed in normal and fetal brain tissues, and weakly expressed in uterus and ovary. Down-regulated in epithelial ovarian, cervical, prostate, breast, brain and lung cancer cell lines and in brain and ovarian tumors.

It localises to the nucleus. Plays a role in the negative regulation of NF-kappa-B signaling at the basal level by modulating transcriptional activity of NF-kappa-B on its target gene promoters. Associates with cyclin D1 promoter containing Myc E-box sequence and transcriptionally represses cyclin D1 expression. Regulates telomerase reverse transcriptase expression and telomerase activity in both ALT (alternative lengthening of telomeres)and telomerase-positive cell lines. The protein is Transcription elongation factor A protein-like 7 (TCEAL7) of Homo sapiens (Human).